We begin with the raw amino-acid sequence, 64 residues long: Alpha-mammal toxin BmK-M8 (64 aa).

The LCN-type CS-alpha/beta domain occupies 2–64 (RDAYIADSEN…ERIKEPGKCG (63 aa)). 4 cysteine pairs are disulfide-bonded: Cys12–Cys63, Cys16–Cys36, Cys22–Cys46, and Cys26–Cys48.

It belongs to the long (4 C-C) scorpion toxin superfamily. Sodium channel inhibitor family. Alpha subfamily. Expressed by the venom gland.

It localises to the secreted. Alpha toxins bind voltage-independently at site-3 of sodium channels (Nav) and inhibit the inactivation of the activated channels, thereby blocking neuronal transmission. This acidic toxin has a weak toxicity and is active against mammals. This chain is Alpha-mammal toxin BmK-M8, found in Olivierus martensii (Manchurian scorpion).